The sequence spans 154 residues: Large ribosomal subunit protein uL30 (154 aa).

This sequence belongs to the universal ribosomal protein uL30 family. As to quaternary structure, part of the 50S ribosomal subunit.

This is Large ribosomal subunit protein uL30 from Methanocaldococcus jannaschii (strain ATCC 43067 / DSM 2661 / JAL-1 / JCM 10045 / NBRC 100440) (Methanococcus jannaschii).